Consider the following 271-residue polypeptide: Eukaryotic translation initiation factor 3 subunit G (271 aa).

Disordered stretches follow at residues 1 to 26, 63 to 119, and 147 to 187; these read MSTT…TNPD, AQRK…AQKL, and TTSS…RDDS. Ser77 bears the Phosphoserine mark. The region spanning 188–267 is the RRM domain; the sequence is TTLKVSQLNS…LILHLEWSKK (80 aa).

This sequence belongs to the eIF-3 subunit G family. As to quaternary structure, component of the eukaryotic translation initiation factor 3 (eIF-3) complex.

It localises to the cytoplasm. Its function is as follows. RNA-binding component of the eukaryotic translation initiation factor 3 (eIF-3) complex, which is involved in protein synthesis of a specialized repertoire of mRNAs and, together with other initiation factors, stimulates binding of mRNA and methionyl-tRNAi to the 40S ribosome. The eIF-3 complex specifically targets and initiates translation of a subset of mRNAs involved in cell proliferation. This subunit can bind 18S rRNA. In Scheffersomyces stipitis (strain ATCC 58785 / CBS 6054 / NBRC 10063 / NRRL Y-11545) (Yeast), this protein is Eukaryotic translation initiation factor 3 subunit G.